The following is a 116-amino-acid chain: MQITVMKGKIHRATVTDADLNYEGSLTVDMDLVDAAGMRVYEKVSVVNVNNGARFETYIIEGKRGSGEICLNGAAARLGMKGDKIIIITYAQVEEKELASDYTPKVVHVDEKNRKR.

Serine 25 serves as the catalytic Schiff-base intermediate with substrate; via pyruvic acid. At serine 25 the chain carries Pyruvic acid (Ser). Threonine 57 serves as a coordination point for substrate. Residue tyrosine 58 is the Proton donor of the active site. 73 to 75 lines the substrate pocket; it reads GAA.

This sequence belongs to the PanD family. In terms of assembly, heterooctamer of four alpha and four beta subunits. It depends on pyruvate as a cofactor. In terms of processing, is synthesized initially as an inactive proenzyme, which is activated by self-cleavage at a specific serine bond to produce a beta-subunit with a hydroxyl group at its C-terminus and an alpha-subunit with a pyruvoyl group at its N-terminus.

The protein localises to the cytoplasm. The catalysed reaction is L-aspartate + H(+) = beta-alanine + CO2. It functions in the pathway cofactor biosynthesis; (R)-pantothenate biosynthesis; beta-alanine from L-aspartate: step 1/1. In terms of biological role, catalyzes the pyruvoyl-dependent decarboxylation of aspartate to produce beta-alanine. The polypeptide is Aspartate 1-decarboxylase (Leptospira interrogans serogroup Icterohaemorrhagiae serovar copenhageni (strain Fiocruz L1-130)).